We begin with the raw amino-acid sequence, 368 residues long: Probable endopolygalacturonase I (368 aa).

The signal sequence occupies residues 1 to 18 (MRSVEILGLAALGSLVAA). The propeptide occupies 19 to 31 (APSPSRVSNSAKK). The cysteines at positions 35 and 50 are disulfide-linked. PbH1 repeat units follow at residues 162–192 (ATNL…DIGE) and 193–214 (SNGV…AINS). Residue Asp-207 is the Proton donor of the active site. The cysteines at positions 209 and 225 are disulfide-linked. His-229 is an active-site residue. 3 PbH1 repeats span residues 244–265 (VKNV…RIKT), 273–295 (VGDV…VIEQ), and 307–328 (TTGV…ASNA). An N-linked (GlcNAc...) asparagine glycan is attached at Asn-246. Disulfide bonds link Cys-335-Cys-340 and Cys-359-Cys-368.

This sequence belongs to the glycosyl hydrolase 28 family.

The protein resides in the secreted. It carries out the reaction (1,4-alpha-D-galacturonosyl)n+m + H2O = (1,4-alpha-D-galacturonosyl)n + (1,4-alpha-D-galacturonosyl)m.. Functionally, involved in maceration and soft-rotting of plant tissue. Hydrolyzes the 1,4-alpha glycosidic bonds of de-esterified pectate in the smooth region of the plant cell wall. The sequence is that of Probable endopolygalacturonase I (pgaI) from Aspergillus clavatus (strain ATCC 1007 / CBS 513.65 / DSM 816 / NCTC 3887 / NRRL 1 / QM 1276 / 107).